The following is a 253-amino-acid chain: Triosephosphate isomerase (253 aa).

13 to 15 (NWK) serves as a coordination point for substrate. Catalysis depends on H100, which acts as the Electrophile. The active-site Proton acceptor is the E169. Substrate-binding positions include G175, S208, and 229 to 230 (GG).

Belongs to the triosephosphate isomerase family. Homodimer.

The protein resides in the cytoplasm. The enzyme catalyses D-glyceraldehyde 3-phosphate = dihydroxyacetone phosphate. It participates in carbohydrate biosynthesis; gluconeogenesis. Its pathway is carbohydrate degradation; glycolysis; D-glyceraldehyde 3-phosphate from glycerone phosphate: step 1/1. Involved in the gluconeogenesis. Catalyzes stereospecifically the conversion of dihydroxyacetone phosphate (DHAP) to D-glyceraldehyde-3-phosphate (G3P). This Synechococcus sp. (strain RCC307) protein is Triosephosphate isomerase.